Consider the following 443-residue polypeptide: Ribulose bisphosphate carboxylase large chain (443 aa).

Residues asparagine 89 and threonine 139 each contribute to the substrate site. Lysine 141 (proton acceptor) is an active-site residue. Lysine 143 contributes to the substrate binding site. Mg(2+)-binding residues include lysine 167, aspartate 169, and glutamate 170. The residue at position 167 (lysine 167) is an N6-carboxylysine. Histidine 260 serves as the catalytic Proton acceptor. 3 residues coordinate substrate: arginine 261, histidine 293, and serine 345.

The protein belongs to the RuBisCO large chain family. Type I subfamily. As to quaternary structure, heterohexadecamer of 8 large chains and 8 small chains; disulfide-linked. The disulfide link is formed within the large subunit homodimers. It depends on Mg(2+) as a cofactor. Post-translationally, the disulfide bond which can form in the large chain dimeric partners within the hexadecamer appears to be associated with oxidative stress and protein turnover.

It localises to the plastid. The protein localises to the chloroplast. The catalysed reaction is 2 (2R)-3-phosphoglycerate + 2 H(+) = D-ribulose 1,5-bisphosphate + CO2 + H2O. The enzyme catalyses D-ribulose 1,5-bisphosphate + O2 = 2-phosphoglycolate + (2R)-3-phosphoglycerate + 2 H(+). In terms of biological role, ruBisCO catalyzes two reactions: the carboxylation of D-ribulose 1,5-bisphosphate, the primary event in carbon dioxide fixation, as well as the oxidative fragmentation of the pentose substrate in the photorespiration process. Both reactions occur simultaneously and in competition at the same active site. In Verbena bonariensis (Argentinian vervain), this protein is Ribulose bisphosphate carboxylase large chain.